The sequence spans 101 residues: MIPGELLIEDGEIELNAGRATVTLSVANTGDRPIQVGSHYHFFETNPALRFDRDKARGMRLDIAAGTAVRFEPGQTRDVQLVALAGKRVVYGFRGDVMGKL.

The protein belongs to the urease beta subunit family. Heterotrimer of UreA (gamma), UreB (beta) and UreC (alpha) subunits. Three heterotrimers associate to form the active enzyme.

The protein localises to the cytoplasm. It catalyses the reaction urea + 2 H2O + H(+) = hydrogencarbonate + 2 NH4(+). It participates in nitrogen metabolism; urea degradation; CO(2) and NH(3) from urea (urease route): step 1/1. The protein is Urease subunit beta of Rhodopseudomonas palustris (strain HaA2).